A 100-amino-acid chain; its full sequence is Large ribosomal subunit protein uL23 (100 aa).

Belongs to the universal ribosomal protein uL23 family. In terms of assembly, part of the 50S ribosomal subunit. Contacts protein L29, and trigger factor when it is bound to the ribosome.

Functionally, one of the early assembly proteins it binds 23S rRNA. One of the proteins that surrounds the polypeptide exit tunnel on the outside of the ribosome. Forms the main docking site for trigger factor binding to the ribosome. This Mycobacterium ulcerans (strain Agy99) protein is Large ribosomal subunit protein uL23.